Here is a 566-residue protein sequence, read N- to C-terminus: Sister chromatid cohesion protein 1 (566 aa).

A Phosphoserine modification is found at Ser161. Ser175 carries the post-translational modification Phosphoserine; by CDC5. Lys210 carries the post-translational modification N6-acetyllysine; by ECO1. Ser263 carries the post-translational modification Phosphoserine; by CDC5. Residue Ser307 is modified to Phosphoserine. The tract at residues Ser325–Gln356 is disordered. Thr354 is subject to Phosphothreonine.

It belongs to the rad21 family. As to quaternary structure, interacts directly with IRR1/SCC3 in cohesin complex. Cohesin complexes are composed of the SMC1 and SMC3 heterodimer attached via their hinge domain, MCD1/SCC1 which link them, and IRR1, which interacts with MCD1. The cohesin complex also interacts with SCC2, which is required for its association with chromosomes. Cleaved by ESP1 at the onset of anaphase. Post-translationally, phosphorylated by CDC5/Polo-like kinase at the onset of anaphase. Phosphorylation takes places at proximity to cleavage sites and is required for an efficient cleavage by ESP1. In terms of processing, acetylated by ECO1.

Its subcellular location is the nucleus. It is found in the chromosome. It localises to the centromere. In terms of biological role, cleavable component of the cohesin complex involved in chromosome cohesion during cell cycle. The cohesin complex is required for the cohesion of sister chromatids after DNA replication. The cohesin complex apparently forms a large proteinaceous ring within which sister chromatids can be trapped. At metaphase-anaphase transition, this protein is cleaved by ESP1 and dissociates from chromatin, allowing sister chromatids to segregate. This is Sister chromatid cohesion protein 1 (MCD1) from Saccharomyces cerevisiae (strain ATCC 204508 / S288c) (Baker's yeast).